The sequence spans 1151 residues: DNA repair protein RAD5 (1151 aa).

Disordered stretches follow at residues 35-54 (QVDAIQEENANDPEEQIAQG) and 142-161 (KREDDFMQSSQSKKPQRANS). Residues 39–49 (IQEENANDPEE) show a composition bias toward acidic residues. Polar residues predominate over residues 148–161 (MQSSQSKKPQRANS). A Helicase ATP-binding domain is found at 500 to 711 (PTMNSFKNGG…YSLVKFLKLE (212 aa)). ATP is bound at residue 513 to 520 (DEMGLGKT). Positions 662-665 (DEGH) match the DEGH box motif. The RING-type zinc-finger motif lies at 897-944 (CSICTAEPIESSSAVVTECEHVFCKECLEEYGNFQKEKSLQQKCPNCR). A Helicase C-terminal domain is found at 979-1146 (ALIRHLQQLQ…RRKRRIEEIQ (168 aa)).

The protein belongs to the SNF2/RAD54 helicase family.

Its subcellular location is the cytoplasm. The protein resides in the nucleus. Its function is as follows. Probable helicase, member of the UBC2/RAD6 epistasis group. Functions with DNA repair protein RAD18 in error-free postreplication DNA repair. Involved in the maintenance of wild-type rates of instability of simple repetitive sequences such as poly(GT) repeats. Seems to be involved in maintaining a balance which acts in favor of error-prone non-homologous joining during DNA double-strand breaks repairs. The sequence is that of DNA repair protein RAD5 (RAD5) from Candida glabrata (strain ATCC 2001 / BCRC 20586 / JCM 3761 / NBRC 0622 / NRRL Y-65 / CBS 138) (Yeast).